The chain runs to 199 residues: NAD(P)H dehydrogenase (quinone) (199 aa).

In terms of domain architecture, Flavodoxin-like spans 4–190 (VLVLYYSAYG…EAAKYQGAHV (187 aa)). FMN-binding positions include 10–15 (SAYGHI) and 78–80 (TRF). Residue Tyr-12 participates in NAD(+) binding. A substrate-binding site is contributed by Trp-98. FMN contacts are provided by residues 113-119 (SSATQHG) and His-134.

Belongs to the WrbA family. It depends on FMN as a cofactor.

The enzyme catalyses a quinone + NADH + H(+) = a quinol + NAD(+). It carries out the reaction a quinone + NADPH + H(+) = a quinol + NADP(+). This Rhizobium rhizogenes (strain K84 / ATCC BAA-868) (Agrobacterium radiobacter) protein is NAD(P)H dehydrogenase (quinone).